We begin with the raw amino-acid sequence, 150 residues long: MFEEMIVEKVRKEAERIAEKQGLEIFDIQYRRESRGWVLRVVIDNPVGYVSVRDCELFSRELERFLDREDLIEHSYTLEVSSPGLDRPLRGPKDYQRFTGKLAKIITKDGKTFIGRIESFVDGIVTISDEKGKHEIDIEDVRKANLEIEF.

This sequence belongs to the RimP family.

It is found in the cytoplasm. Functionally, required for maturation of 30S ribosomal subunits. The chain is Ribosome maturation factor RimP from Thermotoga neapolitana (strain ATCC 49049 / DSM 4359 / NBRC 107923 / NS-E).